An 885-amino-acid chain; its full sequence is Cytosolic carboxypeptidase-like protein 5 (885 aa).

A Peptidase M14 domain is found at 157-570; sequence YPFSYSDCQD…AMAIAALDMA (414 aa). Zn(2+) contacts are provided by His-252 and Glu-255. The interval 343 to 402 is disordered; sequence NSQSPSEHQHSSHLPPDAPLSDPEKADSLQNRAHLGRSSSGDKPEAWTQTEVAEQKPNSV. Over residues 388-402 the composition is skewed to polar residues; it reads AWTQTEVAEQKPNSV. Residue His-434 coordinates Zn(2+). Glu-516 (proton donor/acceptor) is an active-site residue. 2 disordered regions span residues 605-733 and 783-839; these read TTVN…LASS and RLQA…PRPC. Over residues 620–640 the composition is skewed to polar residues; that stretch reads PPRSNNGLPVSCSENTLSRAR. 2 stretches are compositionally biased toward low complexity: residues 641–666 and 714–733; these read SFST…NSPS and PTSS…LASS. Residue Ser-840 is modified to Phosphoserine.

Belongs to the peptidase M14 family. Requires Zn(2+) as cofactor.

Its subcellular location is the cytoplasm. The protein localises to the cytosol. It localises to the nucleus. It is found in the cytoskeleton. The protein resides in the spindle. Its subcellular location is the midbody. It carries out the reaction gamma-L-glutamyl-L-glutamyl-[protein] + H2O = L-glutamyl-[protein] + L-glutamate. The enzyme catalyses (L-glutamyl)(n+1)-gamma-L-glutamyl-L-glutamyl-[protein] + H2O = (L-glutamyl)(n)-gamma-L-glutamyl-L-glutamyl-[protein] + L-glutamate. It catalyses the reaction C-terminal L-alpha-aminoacyl-L-glutamyl-[tubulin] + H2O = C-terminal L-alpha-aminoacyl-[tubulin] + L-glutamate. The catalysed reaction is C-terminal L-alpha-aminoacyl-L-glutamyl-L-glutamyl-[tubulin] + H2O = C-terminal L-alpha-aminoacyl-L-glutamyl-[tubulin] + L-glutamate. In terms of biological role, metallocarboxypeptidase that mediates deglutamylation of tubulin and non-tubulin target proteins. Catalyzes the removal of polyglutamate side chains present on the gamma-carboxyl group of glutamate residues within the C-terminal tail of alpha- and beta-tubulin. Cleaves alpha- and gamma-linked polyglutamate tubulin side-chain, as well as the branching point glutamate. Also catalyzes the removal of alpha-linked glutamate residues from the carboxy-terminus of alpha-tubulin. Mediates deglutamylation of nucleotidyltransferase CGAS, leading to CGAS antiviral defense response activation. In Bos taurus (Bovine), this protein is Cytosolic carboxypeptidase-like protein 5 (AGBL5).